A 199-amino-acid polypeptide reads, in one-letter code: Holliday junction branch migration complex subunit RuvA (199 aa).

The domain I stretch occupies residues 1–64 (MIAKLTGRLD…EDFLRLLGFA (64 aa)). The tract at residues 65–143 (RAEERDWFRL…ALGGISGSGP (79 aa)) is domain II. Residues 144–146 (ALS) form a flexible linker region. The interval 147-199 (AAAGPVGDAIAALTGLGFKPGEASAAVAAANEELGADASLDALVRVALKKAAK) is domain III.

The protein belongs to the RuvA family. As to quaternary structure, homotetramer. Forms an RuvA(8)-RuvB(12)-Holliday junction (HJ) complex. HJ DNA is sandwiched between 2 RuvA tetramers; dsDNA enters through RuvA and exits via RuvB. An RuvB hexamer assembles on each DNA strand where it exits the tetramer. Each RuvB hexamer is contacted by two RuvA subunits (via domain III) on 2 adjacent RuvB subunits; this complex drives branch migration. In the full resolvosome a probable DNA-RuvA(4)-RuvB(12)-RuvC(2) complex forms which resolves the HJ.

It is found in the cytoplasm. Functionally, the RuvA-RuvB-RuvC complex processes Holliday junction (HJ) DNA during genetic recombination and DNA repair, while the RuvA-RuvB complex plays an important role in the rescue of blocked DNA replication forks via replication fork reversal (RFR). RuvA specifically binds to HJ cruciform DNA, conferring on it an open structure. The RuvB hexamer acts as an ATP-dependent pump, pulling dsDNA into and through the RuvAB complex. HJ branch migration allows RuvC to scan DNA until it finds its consensus sequence, where it cleaves and resolves the cruciform DNA. The protein is Holliday junction branch migration complex subunit RuvA of Sphingopyxis alaskensis (strain DSM 13593 / LMG 18877 / RB2256) (Sphingomonas alaskensis).